The sequence spans 351 residues: Beta-hexosaminidase (351 aa).

Substrate is bound by residues Asp62, Arg70, Arg134, and 164 to 165 (KH). Residue His177 is the Proton donor/acceptor of the active site. Asp249 functions as the Nucleophile in the catalytic mechanism.

Belongs to the glycosyl hydrolase 3 family. NagZ subfamily. As to quaternary structure, monomer.

It localises to the cytoplasm. The catalysed reaction is Hydrolysis of terminal non-reducing N-acetyl-D-hexosamine residues in N-acetyl-beta-D-hexosaminides.. It functions in the pathway cell wall biogenesis; peptidoglycan recycling. Functionally, plays a role in peptidoglycan recycling by cleaving the terminal beta-1,4-linked N-acetylglucosamine (GlcNAc) from peptide-linked peptidoglycan fragments, giving rise to free GlcNAc, anhydro-N-acetylmuramic acid and anhydro-N-acetylmuramic acid-linked peptides. This Pasteurella multocida (strain Pm70) protein is Beta-hexosaminidase.